We begin with the raw amino-acid sequence, 510 residues long: 1,3-beta-glucanosyltransferase gas5 (510 aa).

The first 22 residues, 1 to 22 (MNFLHFLTTSLLLLGGSRLALA), serve as a signal peptide directing secretion. A disulfide bridge connects residues C70 and C99. Residue Y88 participates in (1,3-beta-D-glucosyl)n binding. N147 carries an N-linked (GlcNAc...) asparagine glycan. Residues N158, E159, D200, and R205 each coordinate (1,3-beta-D-glucosyl)n. E159 serves as the catalytic Proton donor. 2 disulfides stabilise this stretch: C214–C353 and C232–C264. N-linked (GlcNAc...) asparagine glycosylation is found at N216 and N252. The active-site Nucleophile is the E261. (1,3-beta-D-glucosyl)n is bound at residue Y300. N-linked (GlcNAc...) asparagine glycans are attached at residues N318, N337, and N397. Residues 424 to 456 (QSSTSGSSSGSSSASTTASSSSVSSGSSISSGS) are disordered. S485 carries the GPI-anchor amidated serine lipid modification. Positions 486-510 (SASTFNLSRFYVFAGILAISGLVFA) are cleaved as a propeptide — removed in mature form. A glycan (N-linked (GlcNAc...) asparagine) is linked at N491.

Belongs to the glycosyl hydrolase 72 family. The GPI-anchor is attached to the protein in the endoplasmic reticulum and serves to target the protein to the cell surface. There, the glucosamine-inositol phospholipid moiety is cleaved off and the GPI-modified mannoprotein is covalently attached via its lipidless GPI glycan remnant to the 1,6-beta-glucan of the outer cell wall layer.

It localises to the secreted. Its subcellular location is the cell wall. It is found in the membrane. Functionally, splits internally a 1,3-beta-glucan molecule and transfers the newly generated reducing end (the donor) to the non-reducing end of another 1,3-beta-glucan molecule (the acceptor) forming a 1,3-beta linkage, resulting in the elongation of 1,3-beta-glucan chains in the cell wall. The protein is 1,3-beta-glucanosyltransferase gas5 (gas5) of Schizosaccharomyces pombe (strain 972 / ATCC 24843) (Fission yeast).